The primary structure comprises 151 residues: Ribosome maturation factor RimP (151 aa).

This sequence belongs to the RimP family.

It is found in the cytoplasm. Functionally, required for maturation of 30S ribosomal subunits. This chain is Ribosome maturation factor RimP, found in Shewanella frigidimarina (strain NCIMB 400).